Reading from the N-terminus, the 136-residue chain is Snaclec rhodocytin subunit alpha (136 aa).

Disulfide bonds link Cys-5/Cys-16, Cys-33/Cys-131, and Cys-106/Cys-123. Positions 12–132 (YDQHCYQAFN…CEQMHAFVCK (121 aa)) constitute a C-type lectin domain.

This sequence belongs to the snaclec family. In terms of assembly, dimer (non-covalently linked) of heterodimers of subunits alpha and beta (disulfide-linked). Expressed by the venom gland.

The protein resides in the secreted. Its function is as follows. Elicits platelet aggregation by the binding to the C-type lectin domain family 1 member B (CLEC1B/CLEC2). Binding leads to tyrosine phosphorylation in the cytoplasmic tail of CLEC1B, which promotes the binding of spleen tyrosine kinase (Syk), subsequent activation of PLC-gamma-2, and platelet activation and aggregation. Binding to GPIbalpha (GP1BA) and alpha-2/beta-1 (ITGA2/ITGB1) may also induce aggregation, but this is controversial. This Calloselasma rhodostoma (Malayan pit viper) protein is Snaclec rhodocytin subunit alpha.